The primary structure comprises 119 residues: uncharacterized protein (119 aa).

The first 23 residues, 1 to 23 (MVKWAVSILVNALLLIVIDGYID), serve as a signal peptide directing secretion. Helical transmembrane passes span 27-47 (ISSI…NVLI), 50-70 (LLII…LFVI), and 88-108 (IDGF…HLLI).

The protein resides in the cell membrane. This is an uncharacterized protein from Bacillus subtilis (strain 168).